The following is a 357-amino-acid chain: Probable leucine aminopeptidase TRV_02148.1 (357 aa).

Residues 1–15 form the signal peptide; it reads MKVLAALALSALAMA. Asn76 is a glycosylation site (N-linked (GlcNAc...) asparagine). Residues His167 and Asp185 each coordinate Zn(2+). The segment at 169–188 is disordered; the sequence is DSINGKNPQGEAPGADDNGS. The N-linked (GlcNAc...) asparagine glycan is linked to Asn186. Zn(2+) contacts are provided by Glu224 and Asp251. The N-linked (GlcNAc...) asparagine glycan is linked to Asn269. Cys291 and Cys295 are disulfide-bonded. His324 contributes to the Zn(2+) binding site.

It belongs to the peptidase M28 family. M28E subfamily. As to quaternary structure, monomer. The cofactor is Zn(2+).

The protein localises to the secreted. Its function is as follows. Probable extracellular aminopeptidase which contributes to pathogenicity. The sequence is that of Probable leucine aminopeptidase TRV_02148.1 from Trichophyton verrucosum (strain HKI 0517).